A 400-amino-acid chain; its full sequence is Protein phyllopod (400 aa).

Residues Gln109–Gln127 are interaction with sina. The tract at residues Arg125–Ala145 is disordered. Positions Gln127–Val138 are enriched in low complexity. The tract at residues Tyr241–Ala320 is interaction with ttk. Residues Thr319–Ala362 adopt a coiled-coil conformation. The interval Glu346–Ala382 is disordered.

Component of some E3 complex at least composed of sina, ebi and phyl, required for the degradation of ttk. As to expression, in embryos, it is ubiquitously present before cellularization. During stages 9-11, it is expressed in neuroblasts and the SOP cells. From stage 12 onward, it decreases, but remains in a subset of PNS cells at stages 12-14. Weakly expressed in wing imaginal disks, in the SOP cells of wing margin bristles, notal macrochaetes, and other sensory organs. In leg disks, it is expressed in the precursors of the femoral chordotonal organs, as well as in external sensory SOP cells. Strongly expressed in the eye-antenna disk, it is specifically expressed in R1, R6 and R7 cells, and not in R3, R3, R4, R5 and R8 cells.

It localises to the nucleus. Its function is as follows. Essential adapter component of E3 ubiquitin ligase complexes; involved in R7 photoreceptor cell differentiation, embryonic nervous system, external sensory organ development and specification of particular muscles. E3 ubiquitin ligase complexes mediate ubiquitination and subsequent proteasomal degradation of target proteins. Required for specification of R7 photoreceptor cell fate in the eye by participating in the ubiquitination and subsequent proteasomal degradation of Tramtrack (ttk), a general inhibitor of photoreceptor differentiation. Acts downstream of Notch signaling to specify the fate of the SOP (sensory organ precursor) cells and their progeny, probably via the sina-mediated proteasomal degradation of ttk. Its restricted pattern of expression, upon Notch and Ras signaling pathways, suggests that it acts as a key determinant in E3 complexes to trigger protein proteolysis in appropriate cells. This chain is Protein phyllopod (phyl), found in Drosophila melanogaster (Fruit fly).